Consider the following 204-residue polypeptide: Ribosomal RNA large subunit methyltransferase E (204 aa).

Residues glycine 49, tryptophan 51, aspartate 69, asparagine 87, and aspartate 111 each coordinate S-adenosyl-L-methionine. Lysine 151 acts as the Proton acceptor in catalysis.

The protein belongs to the class I-like SAM-binding methyltransferase superfamily. RNA methyltransferase RlmE family.

The protein localises to the cytoplasm. The enzyme catalyses uridine(2552) in 23S rRNA + S-adenosyl-L-methionine = 2'-O-methyluridine(2552) in 23S rRNA + S-adenosyl-L-homocysteine + H(+). Its function is as follows. Specifically methylates the uridine in position 2552 of 23S rRNA at the 2'-O position of the ribose in the fully assembled 50S ribosomal subunit. This is Ribosomal RNA large subunit methyltransferase E from Nitratidesulfovibrio vulgaris (strain ATCC 29579 / DSM 644 / CCUG 34227 / NCIMB 8303 / VKM B-1760 / Hildenborough) (Desulfovibrio vulgaris).